A 288-amino-acid polypeptide reads, in one-letter code: Disulfide-bond oxidoreductase YghU (288 aa).

Residues asparagine 26, 52-54 (TPN), glutamine 87, isoleucine 101, 117-118 (ES), glutamine 151, and arginine 178 each bind glutathione. Residues 46–133 (QLYSLGTPNG…YLAEKFGYFL (88 aa)) enclose the GST N-terminal domain. The GST C-terminal domain maps to 139–265 (KRTETMNWLF…RIVNRTNGPL (127 aa)). The disordered stretch occupies residues 260-288 (RTNGPLNEQLHERHDASDFETNTEDKRQG). The segment covering 268–288 (QLHERHDASDFETNTEDKRQG) has biased composition (basic and acidic residues).

Belongs to the GST superfamily. Nu-class GSH transferase family. In terms of assembly, homodimer.

Exhibits a robust glutathione (GSH)-dependent disulfide-bond reductase activity toward the model substrate, 2-hydroxyethyl disulfide; the actual physiological substrates are not known. Also displays a modest GSH-dependent peroxidase activity toward several organic hydroperoxides, such as cumene hydroperoxide and linoleic acid 13(S)-hydroperoxide, but does not reduce H(2)O(2) or tert-butyl hydroperoxide at appreciable rates. Exhibits little or no GSH transferase activity with most typical electrophilic substrates, and has no detectable transferase activity toward 1-chloro-2,4-dinitrobenzene (CDNB) with glutathionylspermidine (GspSH) as the nucleophilic substrate. In Escherichia coli (strain K12), this protein is Disulfide-bond oxidoreductase YghU (yghU).